The chain runs to 123 residues: Large ribosomal subunit protein eL8 (123 aa).

It belongs to the eukaryotic ribosomal protein eL8 family. May be present in up to 3 copies per 70S ribosome. Part of the 50S ribosomal subunit, where it binds 23S rRNA at its canonical site near the L1 stalk, as well as a possible second 50S binding site near helix 25 and a possible third site on the beak of the 30S subunit. Component of box C/D small ribonucleoprotein (sRNP) particles that contain rpl7ae, FlpA and nop5, plus a guide RNA. These sRNP particles form homodimers, giving rise to an asymmetric holoenzyme. Probably part of the RNase P complex.

It localises to the cytoplasm. Functionally, multifunctional RNA-binding protein that recognizes the K-turn motif in ribosomal RNA, the RNA component of RNase P, box H/ACA, box C/D and box C'/D' sRNAs. Component of the 70S ribosome. Component of a box C/D small ribonucleoprotein (sRNP) particle that is involved in pre-rRNA and tRNA processing. Utilizes the methyl donor S-adenosyl-L-methionine to catalyze the site-specific 2'-hydroxyl methylation of ribose moieties in rRNA and tRNA. Site specificity is provided by a guide RNA that base pairs with the substrate. Methylation occurs at a characteristic distance from the sequence involved in base pairing with the guide RNA. The chain is Large ribosomal subunit protein eL8 from Pyrococcus furiosus (strain ATCC 43587 / DSM 3638 / JCM 8422 / Vc1).